The primary structure comprises 480 residues: Cytochrome b-c1 complex subunit 1, mitochondrial (480 aa).

The N-terminal 34 residues, 1-34, are a transit peptide targeting the mitochondrion; sequence MAASAVCRAACSGTQVLLRTRRSPALLRLPALRG. An N6-acetyllysine mark is found at Lys111 and Lys138. Residue Lys163 is modified to N6-acetyllysine; alternate. Lys163 is subject to N6-succinyllysine; alternate. The residue at position 212 (Ser212) is a Phosphoserine. Thr214 carries the phosphothreonine modification. At Lys248 the chain carries N6-acetyllysine.

Belongs to the peptidase M16 family. UQCRC1/QCR1 subfamily. As to quaternary structure, component of the ubiquinol-cytochrome c oxidoreductase (cytochrome b-c1 complex, complex III, CIII), a multisubunit enzyme composed of 11 subunits. The complex is composed of 3 respiratory subunits cytochrome b, cytochrome c1 and Rieske protein UQCRFS1, 2 core protein subunits UQCRC1/QCR1 and UQCRC2/QCR2, and 6 low-molecular weight protein subunits UQCRH/QCR6, UQCRB/QCR7, UQCRQ/QCR8, UQCR10/QCR9, UQCR11/QCR10 and subunit 9, the cleavage product of Rieske protein UQCRFS1. The complex exists as an obligatory dimer and forms supercomplexes (SCs) in the inner mitochondrial membrane with NADH-ubiquinone oxidoreductase (complex I, CI) and cytochrome c oxidase (complex IV, CIV), resulting in different assemblies (supercomplex SCI(1)III(2)IV(1) and megacomplex MCI(2)III(2)IV(2)). Interacts with UQCC6. Interacts with STMP1. Acetylation of Lys-138 is observed in liver mitochondria from fasted mice but not from fed mice. As to expression, expressed in neurons and astrocytes of the cerebral cortex and hippocampus (at protein level).

Its subcellular location is the mitochondrion inner membrane. In terms of biological role, component of the ubiquinol-cytochrome c oxidoreductase, a multisubunit transmembrane complex that is part of the mitochondrial electron transport chain which drives oxidative phosphorylation. The respiratory chain contains 3 multisubunit complexes succinate dehydrogenase (complex II, CII), ubiquinol-cytochrome c oxidoreductase (cytochrome b-c1 complex, complex III, CIII) and cytochrome c oxidase (complex IV, CIV), that cooperate to transfer electrons derived from NADH and succinate to molecular oxygen, creating an electrochemical gradient over the inner membrane that drives transmembrane transport and the ATP synthase. The cytochrome b-c1 complex catalyzes electron transfer from ubiquinol to cytochrome c, linking this redox reaction to translocation of protons across the mitochondrial inner membrane, with protons being carried across the membrane as hydrogens on the quinol. In the process called Q cycle, 2 protons are consumed from the matrix, 4 protons are released into the intermembrane space and 2 electrons are passed to cytochrome c. The 2 core subunits UQCRC1/QCR1 and UQCRC2/QCR2 are homologous to the 2 mitochondrial-processing peptidase (MPP) subunits beta-MPP and alpha-MPP respectively, and they seem to have preserved their MPP processing properties. May be involved in the in situ processing of UQCRFS1 into the mature Rieske protein and its mitochondrial targeting sequence (MTS)/subunit 9 when incorporated into complex III. Seems to play an important role in the maintenance of proper mitochondrial function in nigral dopaminergic neurons. The sequence is that of Cytochrome b-c1 complex subunit 1, mitochondrial (Uqcrc1) from Mus musculus (Mouse).